Here is a 229-residue protein sequence, read N- to C-terminus: Large ribosomal subunit protein uL1 (229 aa).

Belongs to the universal ribosomal protein uL1 family. In terms of assembly, part of the 50S ribosomal subunit.

In terms of biological role, binds directly to 23S rRNA. The L1 stalk is quite mobile in the ribosome, and is involved in E site tRNA release. Protein L1 is also a translational repressor protein, it controls the translation of the L11 operon by binding to its mRNA. This chain is Large ribosomal subunit protein uL1, found in Gemmatimonas aurantiaca (strain DSM 14586 / JCM 11422 / NBRC 100505 / T-27).